The primary structure comprises 248 residues: Isoamyl acetate-hydrolyzing esterase 1 homolog (248 aa).

The active-site Nucleophile is Ser-24. Lys-63 carries the N6-succinyllysine modification. Asp-196 acts as the Proton donor in catalysis. The active-site Proton acceptor is His-199.

This sequence belongs to the 'GDSL' lipolytic enzyme family. IAH1 subfamily.

Its function is as follows. Probable lipase. The protein is Isoamyl acetate-hydrolyzing esterase 1 homolog (IAH1) of Homo sapiens (Human).